The chain runs to 131 residues: Large ribosomal subunit protein uL22 (131 aa).

A compositionally biased stretch (basic residues) spans 1–11; that stretch reads MAKGHRSKIKR. The tract at residues 1–20 is disordered; the sequence is MAKGHRSKIKRERNEVRDTR.

The protein belongs to the universal ribosomal protein uL22 family. Part of the 50S ribosomal subunit.

This protein binds specifically to 23S rRNA; its binding is stimulated by other ribosomal proteins, e.g. L4, L17, and L20. It is important during the early stages of 50S assembly. It makes multiple contacts with different domains of the 23S rRNA in the assembled 50S subunit and ribosome. In terms of biological role, the globular domain of the protein is located near the polypeptide exit tunnel on the outside of the subunit, while an extended beta-hairpin is found that lines the wall of the exit tunnel in the center of the 70S ribosome. This Agathobacter rectalis (strain ATCC 33656 / DSM 3377 / JCM 17463 / KCTC 5835 / VPI 0990) (Eubacterium rectale) protein is Large ribosomal subunit protein uL22.